A 1001-amino-acid polypeptide reads, in one-letter code: uncharacterized protein (1001 aa).

Residues 939 to 948 (KVVDNKRDAS) are compositionally biased toward basic and acidic residues. Residues 939 to 1001 (KVVDNKRDAS…HTSKRVQKKN (63 aa)) are disordered. Residues Ser-948 and Ser-950 each carry the phosphoserine modification.

This is an uncharacterized protein from Schizosaccharomyces pombe (strain 972 / ATCC 24843) (Fission yeast).